Consider the following 60-residue polypeptide: Metallothionein A (60 aa).

A beta region spans residues 1–28; sequence MDPCECSKSGNCNCGGSCTCTNCSCKSC. Residues Cys4, Cys6, Cys12, Cys14, Cys18, Cys20, Cys23, Cys25, Cys28, Cys32, Cys33, Cys35, Cys36, Cys40, Cys43, Cys47, Cys49, Cys54, Cys58, and Cys59 each contribute to the a divalent metal cation site. Residues 29–60 form an alpha region; it reads KKSCCPCCPSGCTKCASGCVCIGKTCDTSCCQ.

It belongs to the metallothionein superfamily. Type 1 family.

Functionally, metallothioneins have a high content of cysteine residues that bind various heavy metals. This Chaenocephalus aceratus (Blackfin icefish) protein is Metallothionein A (mta).